A 166-amino-acid chain; its full sequence is Large ribosomal subunit protein mL49 (166 aa).

The segment at 54–77 is disordered; it reads PTKIPEPPKHKHYPTPSGWQPPRD.

Belongs to the mitochondrion-specific ribosomal protein mL49 family. In terms of assembly, component of the mitochondrial ribosome large subunit (39S) which comprises a 16S rRNA and about 50 distinct proteins. Interacts with OXA1L.

The protein localises to the mitochondrion. The protein is Large ribosomal subunit protein mL49 (Mrpl49) of Mus musculus (Mouse).